Consider the following 163-residue polypeptide: 2-C-methyl-D-erythritol 2,4-cyclodiphosphate synthase (163 aa).

Positions 12 and 14 each coordinate a divalent metal cation. 4-CDP-2-C-methyl-D-erythritol 2-phosphate contacts are provided by residues 12–14 and 38–39; these read DVH and HS. H46 serves as a coordination point for a divalent metal cation. Residues 60 to 62, 136 to 139, F143, and R146 each bind 4-CDP-2-C-methyl-D-erythritol 2-phosphate; these read DIG and TTSE.

This sequence belongs to the IspF family. In terms of assembly, homotrimer. Requires a divalent metal cation as cofactor.

The enzyme catalyses 4-CDP-2-C-methyl-D-erythritol 2-phosphate = 2-C-methyl-D-erythritol 2,4-cyclic diphosphate + CMP. The protein operates within isoprenoid biosynthesis; isopentenyl diphosphate biosynthesis via DXP pathway; isopentenyl diphosphate from 1-deoxy-D-xylulose 5-phosphate: step 4/6. Involved in the biosynthesis of isopentenyl diphosphate (IPP) and dimethylallyl diphosphate (DMAPP), two major building blocks of isoprenoid compounds. Catalyzes the conversion of 4-diphosphocytidyl-2-C-methyl-D-erythritol 2-phosphate (CDP-ME2P) to 2-C-methyl-D-erythritol 2,4-cyclodiphosphate (ME-CPP) with a corresponding release of cytidine 5-monophosphate (CMP). This chain is 2-C-methyl-D-erythritol 2,4-cyclodiphosphate synthase, found in Xanthomonas campestris pv. campestris (strain 8004).